We begin with the raw amino-acid sequence, 862 residues long: DNA topoisomerase 3-beta-1 (862 aa).

The Toprim domain maps to threonine 3–serine 153. Residues aspartate 171–phenylalanine 593 form the Topo IA-type catalytic domain. The active-site O-(5'-phospho-DNA)-tyrosine intermediate is the tyrosine 336. The span at proline 821–lysine 851 shows a compositional bias: basic residues. Positions proline 821–methionine 854 are disordered.

The protein belongs to the type IA topoisomerase family. In terms of tissue distribution, isoform 1 is found in testis, heart and skeletal muscle. A 4 kb transcript which probably represents isoform 2 is found in thymus, kidney and pancreas.

It catalyses the reaction ATP-independent breakage of single-stranded DNA, followed by passage and rejoining.. Functionally, releases the supercoiling and torsional tension of DNA introduced during the DNA replication and transcription by transiently cleaving and rejoining one strand of the DNA duplex. Introduces a single-strand break via transesterification at a target site in duplex DNA. The scissile phosphodiester is attacked by the catalytic tyrosine of the enzyme, resulting in the formation of a DNA-(5'-phosphotyrosyl)-enzyme intermediate and the expulsion of a 3'-OH DNA strand. The free DNA strand than undergoes passage around the unbroken strand thus removing DNA supercoils. Finally, in the religation step, the DNA 3'-OH attacks the covalent intermediate to expel the active-site tyrosine and restore the DNA phosphodiester backbone. Possesses negatively supercoiled DNA relaxing activity. This Homo sapiens (Human) protein is DNA topoisomerase 3-beta-1 (TOP3B).